The following is a 164-amino-acid chain: Inner membrane assembly complex subunit 17 (164 aa).

Residues 1–28 (MIKTAKISTLRLAITRNARNLSFTTLVR) constitute a mitochondrion transit peptide. The Mitochondrial matrix segment spans residues 29–97 (SPEVDNSKIK…NEVPLKRFTR (69 aa)). A helical transmembrane segment spans residues 98–118 (PLWIFILMASTFYLGAHLVWW). Residues 119 to 164 (KLAYEKKEVELKHKVDSLETTLKDVMKEKATGPTPCNNKKSWYKFW) lie on the Mitochondrial intermembrane side of the membrane. Residues 121-149 (AYEKKEVELKHKVDSLETTLKDVMKEKAT) are a coiled coil.

The protein belongs to the INA17 family. Component of the inner membrane assembly (INA) complex, composed of INA17 and INA22. Interacts with a subset of F(1)F(0)-ATP synthase subunits of the F(1)-domain and the peripheral stalk.

It localises to the mitochondrion inner membrane. In terms of biological role, component of the INA complex (INAC) that promotes the biogenesis of mitochondrial F(1)F(0)-ATP synthase. INAC facilitates the assembly of the peripheral stalk and promotes the assembly of the catalytic F(1)-domain with the membrane-embedded F(0)-domain. In Candida glabrata (strain ATCC 2001 / BCRC 20586 / JCM 3761 / NBRC 0622 / NRRL Y-65 / CBS 138) (Yeast), this protein is Inner membrane assembly complex subunit 17.